Consider the following 192-residue polypeptide: Adenine phosphoribosyltransferase (192 aa).

This sequence belongs to the purine/pyrimidine phosphoribosyltransferase family. As to quaternary structure, homodimer.

The protein localises to the cytoplasm. The catalysed reaction is AMP + diphosphate = 5-phospho-alpha-D-ribose 1-diphosphate + adenine. The protein operates within purine metabolism; AMP biosynthesis via salvage pathway; AMP from adenine: step 1/1. Functionally, catalyzes a salvage reaction resulting in the formation of AMP, that is energically less costly than de novo synthesis. The protein is Adenine phosphoribosyltransferase of Corynebacterium efficiens (strain DSM 44549 / YS-314 / AJ 12310 / JCM 11189 / NBRC 100395).